The sequence spans 249 residues: Segregation and condensation protein A (249 aa).

This sequence belongs to the ScpA family. As to quaternary structure, component of a cohesin-like complex composed of ScpA, ScpB and the Smc homodimer, in which ScpA and ScpB bind to the head domain of Smc. The presence of the three proteins is required for the association of the complex with DNA.

It is found in the cytoplasm. Functionally, participates in chromosomal partition during cell division. May act via the formation of a condensin-like complex containing Smc and ScpB that pull DNA away from mid-cell into both cell halves. The polypeptide is Segregation and condensation protein A (Listeria welshimeri serovar 6b (strain ATCC 35897 / DSM 20650 / CCUG 15529 / CIP 8149 / NCTC 11857 / SLCC 5334 / V8)).